We begin with the raw amino-acid sequence, 573 residues long: DEAD-box ATP-dependent RNA helicase 47A (573 aa).

The Q motif signature appears at 131–159; sequence KSFEELGLPPLLIDRLNKEGLTAPTEVQS. Positions 162-362 constitute a Helicase ATP-binding domain; that stretch reads IPIISQKHDA…RSWGHDPVLV (201 aa). An ATP-binding site is contributed by 175–182; it reads SYTGSGKT. The short motif at 293-296 is the DEAD box element; that stretch reads DEVD. The 145-residue stretch at 421-565 folds into the Helicase C-terminal domain; that stretch reads TLRRCIHALE…PCEFTEGKLL (145 aa).

This sequence belongs to the DEAD box helicase family.

It catalyses the reaction ATP + H2O = ADP + phosphate + H(+). This Oryza sativa subsp. japonica (Rice) protein is DEAD-box ATP-dependent RNA helicase 47A.